Consider the following 659-residue polypeptide: MKPFKVVAPFEPTGDQPQAIERLSEGVRRGAREQILLGATGTGKTFTIAKVIEQVQKPTLVLAHNKILAAQLCSEFQQFFPENAVEYFVSYYDYYQPEAYIPTTDTYIEKDALINDEIDKLRHSATMALFERRDVIIVASVSCIYGLGSPEDYRDLAVSLRVGNQVDRDYILRRLVDIQYERNDHNFVRNKFRVRGDVVEIFPAGATDRAIRCEWWGDEIERISEFDPLTGEITGTMTHVAIYPASHYVVADEKREQALRSIEEELEERLKELRAQGKLLEAQRLEQRTRNDLEMIREIGFCSGIENYSRHLTGRKPGEPPYTLLDFFPDDWLLVIDESHVTIPQVAAMYNGDRSRKETLIEYGFRLPSAADNRPLKFAEFEERINQVIYVSATPGPYELERVPPSLVVEQIVRPTGLLDPEVEVRPTKGQIDDLYAEIRARVKKNQRVLVTTLTKRMAEDLTEYLKELGVKVRYMHSDVETIERMQIVRDLRLGVFDVLVGINLLREGLDIPEVSLVAILDADKEGFLRAERSLIQTIGRAARNAEGKVIMYADRITQSMQKAINETNRRRAIQEAYNRKHGIVPKTIVKPVRDVIQAVKPVAEAGPANILDTPPHEIPKVVAKLRKEMMQAAKDLDFERAAEIRDIIFELEKKKRGA.

The Helicase ATP-binding domain occupies 25 to 414; that stretch reads EGVRRGAREQ…PSLVVEQIVR (390 aa). Position 38-45 (38-45) interacts with ATP; it reads GATGTGKT. Residues 91–114 carry the Beta-hairpin motif; that stretch reads YYDYYQPEAYIPTTDTYIEKDALI. Positions 431–597 constitute a Helicase C-terminal domain; it reads QIDDLYAEIR…TIVKPVRDVI (167 aa). Positions 620–655 constitute a UVR domain; sequence PKVVAKLRKEMMQAAKDLDFERAAEIRDIIFELEKK.

Belongs to the UvrB family. Forms a heterotetramer with UvrA during the search for lesions. Interacts with UvrC in an incision complex.

It localises to the cytoplasm. The UvrABC repair system catalyzes the recognition and processing of DNA lesions. A damage recognition complex composed of 2 UvrA and 2 UvrB subunits scans DNA for abnormalities. Upon binding of the UvrA(2)B(2) complex to a putative damaged site, the DNA wraps around one UvrB monomer. DNA wrap is dependent on ATP binding by UvrB and probably causes local melting of the DNA helix, facilitating insertion of UvrB beta-hairpin between the DNA strands. Then UvrB probes one DNA strand for the presence of a lesion. If a lesion is found the UvrA subunits dissociate and the UvrB-DNA preincision complex is formed. This complex is subsequently bound by UvrC and the second UvrB is released. If no lesion is found, the DNA wraps around the other UvrB subunit that will check the other stand for damage. In Symbiobacterium thermophilum (strain DSM 24528 / JCM 14929 / IAM 14863 / T), this protein is UvrABC system protein B.